The following is a 381-amino-acid chain: Queuine tRNA-ribosyltransferase (381 aa).

Residue aspartate 103 is the Proton acceptor of the active site. Residues 103–107, aspartate 157, glutamine 200, and glycine 227 contribute to the substrate site; that span reads DSGGF. An RNA binding region spans residues 258–264; that stretch reads GVGTYRE. Catalysis depends on aspartate 277, which acts as the Nucleophile. The segment at 282 to 286 is RNA binding; important for wobble base 34 recognition; the sequence is TRLAR. The Zn(2+) site is built by cysteine 315, cysteine 317, cysteine 320, and histidine 346.

It belongs to the queuine tRNA-ribosyltransferase family. In terms of assembly, homodimer. Within each dimer, one monomer is responsible for RNA recognition and catalysis, while the other monomer binds to the replacement base PreQ1. It depends on Zn(2+) as a cofactor.

The catalysed reaction is 7-aminomethyl-7-carbaguanine + guanosine(34) in tRNA = 7-aminomethyl-7-carbaguanosine(34) in tRNA + guanine. Its pathway is tRNA modification; tRNA-queuosine biosynthesis. Catalyzes the base-exchange of a guanine (G) residue with the queuine precursor 7-aminomethyl-7-deazaguanine (PreQ1) at position 34 (anticodon wobble position) in tRNAs with GU(N) anticodons (tRNA-Asp, -Asn, -His and -Tyr). Catalysis occurs through a double-displacement mechanism. The nucleophile active site attacks the C1' of nucleotide 34 to detach the guanine base from the RNA, forming a covalent enzyme-RNA intermediate. The proton acceptor active site deprotonates the incoming PreQ1, allowing a nucleophilic attack on the C1' of the ribose to form the product. After dissociation, two additional enzymatic reactions on the tRNA convert PreQ1 to queuine (Q), resulting in the hypermodified nucleoside queuosine (7-(((4,5-cis-dihydroxy-2-cyclopenten-1-yl)amino)methyl)-7-deazaguanosine). This chain is Queuine tRNA-ribosyltransferase, found in Cyanothece sp. (strain PCC 7425 / ATCC 29141).